The following is a 154-amino-acid chain: Prefoldin subunit 5 (154 aa).

Residue alanine 2 is modified to N-acetylalanine. Lysine 42 bears the N6-acetyllysine mark. Residue serine 56 is modified to Phosphoserine.

This sequence belongs to the prefoldin subunit alpha family. As to quaternary structure, heterohexamer of two PFD-alpha type and four PFD-beta type subunits.

It localises to the nucleus. In terms of biological role, binds specifically to cytosolic chaperonin (c-CPN) and transfers target proteins to it. Binds to nascent polypeptide chain and promotes folding in an environment in which there are many competing pathways for nonnative proteins. Represses the transcriptional activity of MYC. The sequence is that of Prefoldin subunit 5 (PFDN5) from Pongo abelii (Sumatran orangutan).